Consider the following 215-residue polypeptide: Oligoribonuclease (215 aa).

The region spanning 5–170 (LVWIDCEMTG…ADIHESIREL (166 aa)) is the Exonuclease domain. Tyr127 is a catalytic residue. Residues 196–215 (LDEGKDAPGPSDSASAPPTG) are disordered. Low complexity predominate over residues 202-215 (APGPSDSASAPPTG).

It belongs to the oligoribonuclease family.

The protein resides in the cytoplasm. In terms of biological role, 3'-to-5' exoribonuclease specific for small oligoribonucleotides. The polypeptide is Oligoribonuclease (Mycobacterium avium (strain 104)).